The chain runs to 94 residues: Small ribosomal subunit protein uS19 (94 aa).

The protein belongs to the universal ribosomal protein uS19 family.

In terms of biological role, protein S19 forms a complex with S13 that binds strongly to the 16S ribosomal RNA. This Syntrophomonas wolfei subsp. wolfei (strain DSM 2245B / Goettingen) protein is Small ribosomal subunit protein uS19.